Consider the following 184-residue polypeptide: Threonylcarbamoyl-AMP synthase (184 aa).

In terms of domain architecture, YrdC-like spans 1 to 184 (MNNLENIVEQ…IFTQHIFRQG (184 aa)).

This sequence belongs to the SUA5 family. TsaC subfamily.

It is found in the cytoplasm. The enzyme catalyses L-threonine + hydrogencarbonate + ATP = L-threonylcarbamoyladenylate + diphosphate + H2O. Functionally, required for the formation of a threonylcarbamoyl group on adenosine at position 37 (t(6)A37) in tRNAs that read codons beginning with adenine. Catalyzes the conversion of L-threonine, HCO(3)(-)/CO(2) and ATP to give threonylcarbamoyl-AMP (TC-AMP) as the acyladenylate intermediate, with the release of diphosphate. This is Threonylcarbamoyl-AMP synthase from Actinobacillus pleuropneumoniae serotype 5b (strain L20).